Here is a 589-residue protein sequence, read N- to C-terminus: Nicotinate phosphoribosyltransferase (589 aa).

Residues 1-30 (MSQSNTPLKRKKTENGYSENGSTTGATSNQ) form a disordered region. Polar residues predominate over residues 15–30 (NGYSENGSTTGATSNQ). Nicotinate is bound by residues Tyr68 and Thr256. His259 is subject to Phosphohistidine. Position 356 (Arg356) interacts with nicotinate. Thr418 lines the 5-phospho-alpha-D-ribose 1-diphosphate pocket.

This sequence belongs to the NAPRTase family. Mg(2+) is required as a cofactor. It depends on Mn(2+) as a cofactor. Transiently phosphorylated on a His residue during the reaction cycle. Phosphorylation strongly increases the affinity for substrates and increases the rate of nicotinate D-ribonucleotide production. Dephosphorylation regenerates the low-affinity form of the enzyme, leading to product release.

It carries out the reaction nicotinate + 5-phospho-alpha-D-ribose 1-diphosphate + ATP + H2O = nicotinate beta-D-ribonucleotide + ADP + phosphate + diphosphate. It functions in the pathway cofactor biosynthesis; NAD(+) biosynthesis; nicotinate D-ribonucleotide from nicotinate: step 1/1. Functionally, catalyzes the first step in the biosynthesis of NAD from nicotinic acid, the ATP-dependent synthesis of beta-nicotinate D-ribonucleotide from nicotinate and 5-phospho-D-ribose 1-phosphate. Helps prevent cellular oxidative stress via its role in NAD biosynthesis. The protein is Nicotinate phosphoribosyltransferase (naprt) of Dictyostelium discoideum (Social amoeba).